A 156-amino-acid polypeptide reads, in one-letter code: Endoribonuclease YbeY (156 aa).

3 residues coordinate Zn(2+): H115, H119, and H125.

This sequence belongs to the endoribonuclease YbeY family. Zn(2+) serves as cofactor.

The protein localises to the cytoplasm. Single strand-specific metallo-endoribonuclease involved in late-stage 70S ribosome quality control and in maturation of the 3' terminus of the 16S rRNA. The sequence is that of Endoribonuclease YbeY from Mannheimia succiniciproducens (strain KCTC 0769BP / MBEL55E).